Here is a 95-residue protein sequence, read N- to C-terminus: Costars family protein At4g33640 (95 aa).

An N-acetylmethionine modification is found at methionine 1.

This sequence belongs to the costars family.

This Arabidopsis thaliana (Mouse-ear cress) protein is Costars family protein At4g33640.